The chain runs to 457 residues: Neuropeptide receptor npr-1 (457 aa).

Topologically, residues 1–22 are extracellular; the sequence is MEVENFTDCQVYWKVYPDPSQS. The helical transmembrane segment at 23–43 threads the bilayer; sequence IYAIVPFLTVYLFLFFLGLFG. The Cytoplasmic segment spans residues 44 to 62; that stretch reads NVTLIYVTCSHKALLSVQN. A helical membrane pass occupies residues 63-83; it reads IFILNLAASDCMMCILSLPIT. At 84–100 the chain is on the extracellular side; sequence PITNVYKNWYFGNLLCH. Cysteine 99 and cysteine 178 are oxidised to a cystine. The helical transmembrane segment at 101 to 121 threads the bilayer; sequence LIPCIQGISIFVCTFSLGAIA. Over 122-140 the chain is Cytoplasmic; the sequence is LDRYILVVRPHSTPLSQRG. The chain crosses the membrane as a helical span at residues 141-161; it reads AFLTTVLLWILSFVVTLPYAF. Topologically, residues 162 to 193 are extracellular; that stretch reads NMQMIEYTEERICGYFCTEKWESAKSRRAYTM. Residues 194–214 form a helical membrane-spanning segment; that stretch reads IVMLAQFVVPFAVMAFCYANI. Topologically, residues 215–279 are cytoplasmic; sequence VSVLSKRAQT…LQNRRTTSIL (65 aa). The chain crosses the membrane as a helical span at residues 280-300; sequence VTMVVWFGITWLPHNVISLII. The Extracellular segment spans residues 301-324; it reads EYDDTQSFFRLYGRDDYDISYLLN. The helical transmembrane segment at 325-345 threads the bilayer; it reads LFTHSIAMSNNVLNPVLYAWL. The Cytoplasmic portion of the chain corresponds to 346–457; the sequence is NPSFRQLVIK…IEFSVNDTLV (112 aa).

It belongs to the G-protein coupled receptor 1 family. Expressed in neurons, including neurons in the head, the ventral nerve cord, and the preanal ganglion.

Its subcellular location is the membrane. Its function is as follows. G-protein coupled receptor for FARP(FMRFamide related peptide) neuropeptides. Activated by FARP neuropeptides flp-18 and flp-21. Plays a role in modulating social and feeding behavior. Required to modulate locomotion quiescence during the sleep-like state called lethargus, which occurs during molting between larval and adult stages, in part by regulating touch sensitivity. This chain is Neuropeptide receptor npr-1, found in Caenorhabditis elegans.